A 205-amino-acid polypeptide reads, in one-letter code: Transcriptional regulator GfcR (205 aa).

This sequence belongs to the purine/pyrimidine phosphoribosyltransferase family. GfcR subfamily.

The polypeptide is Transcriptional regulator GfcR (Methanococcus vannielii (strain ATCC 35089 / DSM 1224 / JCM 13029 / OCM 148 / SB)).